A 469-amino-acid polypeptide reads, in one-letter code: NADH-quinone oxidoreductase subunit N (469 aa).

Helical transmembrane passes span 6 to 26 (IWII…LLLG), 37 to 57 (VGVA…PAAL), 61 to 81 (LGVA…LTAA), 96 to 116 (ISGE…AVVS), 121 to 141 (LLIL…LVAI), 156 to 176 (LLLG…LYAA), 197 to 217 (PIAL…ISLV), 234 to 254 (VVAF…LLLL), 263 to 283 (LHTP…LAAL), 291 to 311 (MLAY…LTGS), 315 to 335 (FAAV…AFGA), 362 to 382 (AGIL…AGFI), 397 to 419 (IPLA…RVVV), and 441 to 461 (IALS…SPLL).

The protein belongs to the complex I subunit 2 family. NDH-1 is composed of 14 different subunits. Subunits NuoA, H, J, K, L, M, N constitute the membrane sector of the complex.

The protein resides in the cell inner membrane. The catalysed reaction is a quinone + NADH + 5 H(+)(in) = a quinol + NAD(+) + 4 H(+)(out). Its function is as follows. NDH-1 shuttles electrons from NADH, via FMN and iron-sulfur (Fe-S) centers, to quinones in the respiratory chain. The immediate electron acceptor for the enzyme in this species is believed to be ubiquinone. Couples the redox reaction to proton translocation (for every two electrons transferred, four hydrogen ions are translocated across the cytoplasmic membrane), and thus conserves the redox energy in a proton gradient. This chain is NADH-quinone oxidoreductase subunit N, found in Geotalea uraniireducens (strain Rf4) (Geobacter uraniireducens).